The sequence spans 353 residues: MDIFKELILKHTDENVLISPVSILSTLSILNHGAAGSTAEQLSKYIENMNENTPDDNNDMDVDIPYCATLATANKIYGSDSIEFHASFLQKIKDDFQTVNFNNANQTKELINEWVKTMTNGKINSLLTSPLSINTRMTVVSAVHFKAMWKYPFSKHLTYTDKFYISKNIVTSVDMMVSTENNLQYVHINELFGGFSIIDIPYEGNSSMVIILPDDIEGIYNIEKNITDEKFKKWCGMLSTKSIDLYMPKFKVEMTEPYNLVPILENLGLTNIFGYYADFSKMCNETITVEKFLHTTFIDVNEEYTEASAVTGVFMTNFSMVYRTKVYINHPFMYMIKDNTGRILFIGKYCYPQ.

Belongs to the serpin family. Poxviruses subfamily.

It localises to the host cytoplasm. Plays a role in mediating viral host range. May act to inhibit a caspase independent form of apoptosis to allow efficient virus replication in infected cells. The chain is Serine proteinase inhibitor 1 (OPG208) from Vaccinia virus (strain Western Reserve) (VACV).